Here is a 63-residue protein sequence, read N- to C-terminus: Muscarinic toxin 2 (63 aa).

4 cysteine pairs are disulfide-bonded: C3–C22, C17–C42, C44–C55, and C56–C61.

This sequence belongs to the three-finger toxin family. Short-chain subfamily. Type B muscarinic toxin sub-subfamily. In terms of assembly, monomer. As to expression, expressed by the venom gland.

Its subcellular location is the secreted. Blocks M2 muscarinic acetylcholine receptors (CHRM2). Fully blocks the binding of N-methylscopolamine (NMS) and oxotremorine-M to M2 receptors, slightly increased NMS binding to M1 receptors. The protein is Muscarinic toxin 2 of Dendroaspis angusticeps (Eastern green mamba).